The chain runs to 326 residues: Flotillin-like protein FloA (326 aa).

A run of 2 helical transmembrane segments spans residues 6-26 (IILFFLVVAVIVLFYFVGSSV) and 27-47 (SLWIQALVSGARVGLLNIVFM).

This sequence belongs to the flotillin-like FloA family. Homooligomerizes.

It localises to the cell membrane. The protein resides in the membrane raft. Found in functional membrane microdomains (FMM) that may be equivalent to eukaryotic membrane rafts. FMMs are highly dynamic and increase in number as cells age. Flotillins are thought to be important factors in membrane fluidity. This is Flotillin-like protein FloA from Desulfosudis oleivorans (strain DSM 6200 / JCM 39069 / Hxd3) (Desulfococcus oleovorans).